The following is a 255-amino-acid chain: Ribonuclease HII (255 aa).

Residues 72 to 255 (RLIAGVDEAG…KTFAPVQSYC (184 aa)) form the RNase H type-2 domain. Residues aspartate 78, glutamate 79, and aspartate 170 each contribute to the a divalent metal cation site.

Belongs to the RNase HII family. Mn(2+) serves as cofactor. Requires Mg(2+) as cofactor.

Its subcellular location is the cytoplasm. The catalysed reaction is Endonucleolytic cleavage to 5'-phosphomonoester.. In terms of biological role, endonuclease that specifically degrades the RNA of RNA-DNA hybrids. In Bacillus velezensis (strain DSM 23117 / BGSC 10A6 / LMG 26770 / FZB42) (Bacillus amyloliquefaciens subsp. plantarum), this protein is Ribonuclease HII.